The sequence spans 406 residues: Methyltransferase cfoD (406 aa).

S-adenosyl-L-methionine-binding residues include aspartate 270 and arginine 312. Histidine 315 serves as the catalytic Proton acceptor.

It belongs to the class I-like SAM-binding methyltransferase superfamily. Cation-independent O-methyltransferase family.

Its pathway is secondary metabolite biosynthesis; flavonoid biosynthesis. Functionally, methyltransferase; part of the gene cluster that mediates the biosynthesis of chlorflavonin, a fungal flavonoid with acetolactate synthase inhibitory activity. Within the pathway, cfoD is responsible for the methylation at position C3-OH of flavonoid. The pathway begins with the PKS-NRPS hybrid synthetase cfoA that uses benzoic acid or p-hydroxybenzoic acid as a starter unit with four rounds of chain elongation using malonyl-CoA to form the chalcone skeleton. Then, a new type of chalcone isomerase, cfoK, catalyzes the conversion of the chalcone into a flavanone by a histidine-mediated oxa-Michael addition mechanism. The desaturation of flavanone to flavone is catalyzed by a new type of flavone synthase, the flavin mononucleotide (FMN)-dependent oxidoreductase cfoJ. Monooxygenases cfoF, cfoG, and P450 cfoH are responsible for the hydroxylation of the flavonoid skeleton at sites C3, C8, and C2', respectively. Like cfoF, the dehydratase cfoI also plays a role in the hydroxylation of position C3. Methyltransferases cfoB, cfoC, and cfoD then catalyze the methylation of C7-OH, C8-OH, and C3-OH, respectively. Finally, the monooxygenase cfoE is responsible for the chlorination of flavonoid at position C3'. This is Methyltransferase cfoD from Aspergillus candidus.